The primary structure comprises 590 residues: MQNNSVQQANISIMSSFSGSKKVYVEGSSSDIQVPMREIALSPTTGSFGEEENAPVRVYDTSGPYTDPEVTINIQEGLKPLRQKWITERGDVEEYEGRAIKPEDNGYKKAKPNVSYPGLKRKPLRAKAGQNVTQMHYAKKGIITPEMEFIAIREHVSPEFVRDEVASGRAIIPSNINHPESEPMIIGRNFHVKINANIGNSAVTSSIEEEVEKMTWAIRWGADTMMDLSTGKDIHTTREWIIRNCPVPVGTVPIYQALEKVNGVAEDLTWEIYRDTLIEQAEQGVDYFTIHAGVLLRYVPLTAKRTTGIVSRGGAIMAQWCLAHHQESFLYTHFEEICEIMKMYDIAFSLGDGLRPGSIADANDEAQFAELETLGELTQIAWKHDVQVMIEGPGHVPMHKIKENVDKQMDICKEAPFYTLGPLTTDIAPGYDHITSAIGAAMIGWYGTAMLCYVTPKEHLGLPNRDDVREGVITYKIAAHAADLAKGHPGAQIRDDALSKARFEFRWRDQFNLSLDPERALEYHDETLPAEGAKTAHFCSMCGPKFCSMRISQDIRDYAKKNDLSEAEAINKGLKEKAKEFVDTGSNLYQ.

Substrate-binding positions include Asn-197, Met-226, Tyr-255, His-291, Ser-311–Gly-313, Asp-352–Arg-355, and Glu-391. His-395 lines the Zn(2+) pocket. Tyr-418 serves as a coordination point for substrate. His-459 is a binding site for Zn(2+). [4Fe-4S] cluster is bound by residues Cys-539, Cys-542, and Cys-547.

It belongs to the ThiC family. The cofactor is [4Fe-4S] cluster.

It carries out the reaction 5-amino-1-(5-phospho-beta-D-ribosyl)imidazole + S-adenosyl-L-methionine = 4-amino-2-methyl-5-(phosphooxymethyl)pyrimidine + CO + 5'-deoxyadenosine + formate + L-methionine + 3 H(+). The protein operates within cofactor biosynthesis; thiamine diphosphate biosynthesis. In terms of biological role, catalyzes the synthesis of the hydroxymethylpyrimidine phosphate (HMP-P) moiety of thiamine from aminoimidazole ribotide (AIR) in a radical S-adenosyl-L-methionine (SAM)-dependent reaction. This chain is Phosphomethylpyrimidine synthase, found in Bacillus subtilis (strain 168).